A 168-amino-acid polypeptide reads, in one-letter code: Photosystem I assembly protein Ycf3 (168 aa).

TPR repeat units lie at residues Ala-35–Pro-68, Ser-72–Leu-105, and Gly-120–Asn-153.

The protein belongs to the Ycf3 family.

It is found in the plastid. The protein localises to the chloroplast thylakoid membrane. Functionally, essential for the assembly of the photosystem I (PSI) complex. May act as a chaperone-like factor to guide the assembly of the PSI subunits. The polypeptide is Photosystem I assembly protein Ycf3 (Plantago lanceolata (English plantain)).